A 185-amino-acid chain; its full sequence is ATP synthase subunit delta (185 aa).

Belongs to the ATPase delta chain family. F-type ATPases have 2 components, F(1) - the catalytic core - and F(0) - the membrane proton channel. F(1) has five subunits: alpha(3), beta(3), gamma(1), delta(1), epsilon(1). CF(0) has four main subunits: a(1), b(1), b'(1) and c(10-14). The alpha and beta chains form an alternating ring which encloses part of the gamma chain. F(1) is attached to F(0) by a central stalk formed by the gamma and epsilon chains, while a peripheral stalk is formed by the delta, b and b' chains.

The protein localises to the cell inner membrane. Functionally, f(1)F(0) ATP synthase produces ATP from ADP in the presence of a proton or sodium gradient. F-type ATPases consist of two structural domains, F(1) containing the extramembraneous catalytic core and F(0) containing the membrane proton channel, linked together by a central stalk and a peripheral stalk. During catalysis, ATP synthesis in the catalytic domain of F(1) is coupled via a rotary mechanism of the central stalk subunits to proton translocation. In terms of biological role, this protein is part of the stalk that links CF(0) to CF(1). It either transmits conformational changes from CF(0) to CF(1) or is implicated in proton conduction. This chain is ATP synthase subunit delta, found in Gloeobacter violaceus (strain ATCC 29082 / PCC 7421).